The chain runs to 399 residues: Probable 3-ketosteroid-9-alpha-monooxygenase, oxygenase component (399 aa).

A Rieske domain is found at 26 to 128 (WHCLGLVRDF…VAEVSGQLFV (103 aa)). Positions 67, 69, 86, and 89 each coordinate [2Fe-2S] cluster. Fe cation contacts are provided by Asn175, His181, His186, and Asp307.

As to quaternary structure, homotrimer. The two-component system 3-ketosteroid-9-alpha-monooxygenase is composed of an oxygenase component KshA and a reductase component KshB. Requires [2Fe-2S] cluster as cofactor. Fe cation serves as cofactor.

Its function is as follows. Could catalyze the introduction of a 9alpha-hydroxyl moiety into the ring B of 3-ketosteroid substrates. This Rhodococcus rhodochrous protein is Probable 3-ketosteroid-9-alpha-monooxygenase, oxygenase component.